The following is a 247-amino-acid chain: LHFPL tetraspan subfamily member 4 protein (247 aa).

Transmembrane regions (helical) follow at residues 22–42, 97–117, 127–147, and 178–198; these read IGVL…VVFI, FFVL…ALFF, ICAW…MIFP, and ILAI…FVLG.

The protein belongs to the LHFP family. Interacts with GABA(A) receptor subunits. Interacts with GABRB3. Interacts with GABRA2. Interacts with GABRG2. Interacts with GABRA1. Identified in a complex of 720 kDa composed of LHFPL4, NLGN2, GABRA1, GABRB2, GABRG2 and GABRB3. Interacts with NLGN2; leading to mutual regulation of protein level and synaptic clustering. Highly expressed in the brain, including the cortex, hippocampus, midbrain, olfactory bulb pona plus medulla (at protein level). Expressed in the in the cerebellar granular layer and in granular layer. Colocalized with GPHN at inhibitory synapses. Weakly expressed in heart, testis, lung, intestine, vagina, ovary and uterus.

The protein localises to the cell projection. It localises to the dendrite. The protein resides in the postsynaptic cell membrane. Functionally, plays a role in the regulation of inhibitory synapse formation and function by being involved in maintening gamma-aminobutyric acid receptors (GABAARs) clustering and their associated scaffold proteins at inhibitory synaptic sites. Acts in concert with NLGN2 to recruit or stabilize GABAARs. The sequence is that of LHFPL tetraspan subfamily member 4 protein from Mus musculus (Mouse).